A 163-amino-acid chain; its full sequence is 2-amino-4-hydroxy-6-hydroxymethyldihydropteridine pyrophosphokinase (163 aa).

This sequence belongs to the HPPK family.

The enzyme catalyses 6-hydroxymethyl-7,8-dihydropterin + ATP = (7,8-dihydropterin-6-yl)methyl diphosphate + AMP + H(+). It functions in the pathway cofactor biosynthesis; tetrahydrofolate biosynthesis; 2-amino-4-hydroxy-6-hydroxymethyl-7,8-dihydropteridine diphosphate from 7,8-dihydroneopterin triphosphate: step 4/4. Functionally, catalyzes the transfer of pyrophosphate from adenosine triphosphate (ATP) to 6-hydroxymethyl-7,8-dihydropterin, an enzymatic step in folate biosynthesis pathway. In Helicobacter pylori (strain ATCC 700392 / 26695) (Campylobacter pylori), this protein is 2-amino-4-hydroxy-6-hydroxymethyldihydropteridine pyrophosphokinase (folK).